Consider the following 419-residue polypeptide: UDP-N-acetylglucosamine 1-carboxyvinyltransferase 2 (419 aa).

22–23 (KN) lines the phosphoenolpyruvate pocket. Arginine 92 contacts UDP-N-acetyl-alpha-D-glucosamine. Cysteine 116 (proton donor) is an active-site residue. Cysteine 116 is modified (2-(S-cysteinyl)pyruvic acid O-phosphothioketal). Residues 121–125 (RPIDL), aspartate 306, and isoleucine 328 contribute to the UDP-N-acetyl-alpha-D-glucosamine site.

This sequence belongs to the EPSP synthase family. MurA subfamily.

The protein resides in the cytoplasm. The enzyme catalyses phosphoenolpyruvate + UDP-N-acetyl-alpha-D-glucosamine = UDP-N-acetyl-3-O-(1-carboxyvinyl)-alpha-D-glucosamine + phosphate. The protein operates within cell wall biogenesis; peptidoglycan biosynthesis. Cell wall formation. Adds enolpyruvyl to UDP-N-acetylglucosamine. The protein is UDP-N-acetylglucosamine 1-carboxyvinyltransferase 2 of Streptococcus pyogenes serotype M3 (strain ATCC BAA-595 / MGAS315).